The sequence spans 223 residues: Adenylate kinase 4, mitochondrial (223 aa).

15–20 (GSGKGT) is a binding site for a ribonucleoside 5'-triphosphate. The tract at residues 35 to 64 (SSGHFLRENIKANTEVGDMAKQYIEKGLLV) is NMP. The AMP site is built by Ser-36 and Arg-41. The residue at position 60 (Lys-60) is an N6-succinyllysine. AMP contacts are provided by residues 62–64 (LLV), 89–92 (GFPR), and Gln-96. The interval 125–162 (RRWIHPPSGRVYNLDFNPPHVHGMDDVTGEPLVQQEDD) is LID. A ribonucleoside 5'-triphosphate contacts are provided by residues Arg-126 and 135 to 136 (VY). Position 170 (Arg-170) interacts with AMP. An N6-acetyllysine modification is found at Lys-175. N6-acetyllysine; alternate occurs at positions 179 and 186. N6-succinyllysine; alternate occurs at positions 179 and 186. Thr-199 contributes to the a ribonucleoside 5'-triphosphate binding site.

It belongs to the adenylate kinase family. AK3 subfamily. As to quaternary structure, monomer. Interacts with SLC25A5/ANT2.

It is found in the mitochondrion matrix. It catalyses the reaction a ribonucleoside 5'-phosphate + ATP = a ribonucleoside 5'-diphosphate + ADP. The catalysed reaction is AMP + ATP = 2 ADP. It carries out the reaction GTP + AMP = GDP + ADP. The enzyme catalyses CMP + ATP = CDP + ADP. It catalyses the reaction GTP + CMP = CDP + GDP. The catalysed reaction is dAMP + ATP = dADP + ADP. It carries out the reaction dCMP + ATP = dCDP + ADP. The enzyme catalyses a 2'-deoxyribonucleoside 5'-diphosphate + ATP = a 2'-deoxyribonucleoside 5'-triphosphate + ADP. It catalyses the reaction a ribonucleoside 5'-diphosphate + ATP = a ribonucleoside 5'-triphosphate + ADP. The catalysed reaction is GDP + ATP = GTP + ADP. It carries out the reaction CDP + GTP = CTP + GDP. The enzyme catalyses CDP + ATP = CTP + ADP. It catalyses the reaction UDP + ATP = UTP + ADP. The catalysed reaction is GTP + UDP = UTP + GDP. It carries out the reaction dADP + GTP = dATP + GDP. The enzyme catalyses dCDP + GTP = dCTP + GDP. It catalyses the reaction dCDP + ATP = dCTP + ADP. The catalysed reaction is dGDP + ATP = dGTP + ADP. It carries out the reaction dTDP + GTP = dTTP + GDP. The enzyme catalyses dTDP + ATP = dTTP + ADP. Its function is as follows. Broad-specificity mitochondrial nucleoside phosphate kinase involved in cellular nucleotide homeostasis by catalyzing nucleoside-phosphate interconversions. Similar to other adenylate kinases, preferentially catalyzes the phosphorylation of the nucleoside monophosphate AMP with ATP as phosphate donor to produce ADP. Phosphorylates only AMP when using GTP as phosphate donor. In vitro, can also catalyze the phosphorylation of CMP, dAMP and dCMP and use GTP as an alternate phosphate donor. Moreover, exhibits a diphosphate kinase activity, producing ATP, CTP, GTP, UTP, TTP, dATP, dCTP and dGTP from the corresponding diphosphate substrates with either ATP or GTP as phosphate donors. Plays a role in controlling cellular ATP levels by regulating phosphorylation and activation of the energy sensor protein kinase AMPK. Plays a protective role in the cellular response to oxidative stress. The sequence is that of Adenylate kinase 4, mitochondrial from Bos taurus (Bovine).